The chain runs to 98 residues: Citrate lyase acyl carrier protein (98 aa).

Ser-14 is modified (O-(phosphoribosyl dephospho-coenzyme A)serine).

Belongs to the CitD family. Oligomer with a subunit composition of (alpha,beta,gamma)6.

It is found in the cytoplasm. Covalent carrier of the coenzyme of citrate lyase. The sequence is that of Citrate lyase acyl carrier protein from Citrobacter koseri (strain ATCC BAA-895 / CDC 4225-83 / SGSC4696).